The chain runs to 519 residues: Cytochrome P450 52A10 (519 aa).

Cys466 is a binding site for heme.

Belongs to the cytochrome P450 family. It depends on heme as a cofactor.

Its subcellular location is the membrane. Its function is as follows. Together with an NADPH cytochrome P450 the enzyme system catalyzes the terminal hydroxylation as the first step in the assimilation of alkanes and fatty acids. This Candida maltosa (Yeast) protein is Cytochrome P450 52A10 (CYP52A10).